We begin with the raw amino-acid sequence, 438 residues long: Enolase (438 aa).

2 residues coordinate substrate: His-159 and Glu-168. Residue Glu-211 is the Proton donor of the active site. Mg(2+) is bound by residues Asp-246, Glu-297, and Asp-322. Substrate-binding residues include Glu-297 and Asp-322. Lys-347 acts as the Proton acceptor in catalysis. Residues 374–377 (SHRS) and Lys-398 each bind substrate.

The protein belongs to the enolase family. Homodimer. Requires Mg(2+) as cofactor.

Its subcellular location is the cytoplasm. The enzyme catalyses (2R)-2-phosphoglycerate = phosphoenolpyruvate + H2O. It participates in carbohydrate degradation; glycolysis; pyruvate from D-glyceraldehyde 3-phosphate: step 4/5. This Aspergillus fumigatus (strain ATCC MYA-4609 / CBS 101355 / FGSC A1100 / Af293) (Neosartorya fumigata) protein is Enolase (enoA).